The sequence spans 827 residues: Inactive rhomboid protein 2 (827 aa).

A disordered region spans residues 1 to 87 (MDSTDKNGES…GFRRQASLSQ (87 aa)). Residues 1–380 (MDSTDKNGES…HRPYFTYWLT (380 aa)) are Cytoplasmic-facing. Phosphoserine is present on serine 60. Residues 64–77 (QRGRWQEGSSEKRP) show a composition bias toward basic and acidic residues. Serine 84, serine 88, serine 294, serine 296, and serine 299 each carry phosphoserine. The chain crosses the membrane as a helical span at residues 381–401 (FVHIIITLLVICTYGIAPVGF). Residues 402-631 (AQHVTTQLVL…PDQFYRLWLS (230 aa)) are Lumenal-facing. A helical membrane pass occupies residues 632-652 (LFLHAGVVHCLVSVVFQMTIL). Residues 653-663 (RDLEKLAGWHR) are Cytoplasmic-facing. A helical membrane pass occupies residues 664-684 (IAIIFILSGITGNLASAIFLP). The Lumenal segment spans residues 685–686 (YR). Residues 687 to 707 (AEVGPAGSQFGLLACLFVELF) traverse the membrane as a helical segment. The Cytoplasmic segment spans residues 708–718 (QSWQLLERPWK). The chain crosses the membrane as a helical span at residues 719 to 739 (AFLNLSAIVLFLFICGLLPWI). Over 740 to 744 (DNIAH) the chain is Lumenal. Residues 745–765 (IFGFLSGLLLAFAFLPYITFG) traverse the membrane as a helical segment. Residues 766–773 (TSDKYRKR) are Cytoplasmic-facing. Residues 774–794 (ALILVSLLVFAGLFASLVIWL) form a helical membrane-spanning segment. The Lumenal segment spans residues 795–827 (YVYPINWPWIEYLTCFPFTSRFCEKYELDQVLH).

This sequence belongs to the peptidase S54 family. As to quaternary structure, interacts with EGF. Interacts (via cytoplasmic N-terminus) with FRMD8/iTAP; this interaction leads to mutual protein stabilization. Interacts with ADAM17/TACE. As to expression, detected in retina and spleen.

It is found in the endoplasmic reticulum membrane. It localises to the cell membrane. Regulates ADAM17 protease, a sheddase of the epidermal growth factor (EGF) receptor ligands and TNF, thereby plays a role in sleep, cell survival, proliferation, migration and inflammation. Does not exhibit any protease activity on its own. The polypeptide is Inactive rhomboid protein 2 (RHBDF2) (Canis lupus familiaris (Dog)).